We begin with the raw amino-acid sequence, 795 residues long: MKFSELWLREWVNPAIDSDALANQITMAGLEVDGVEPVAGSFHGVVVGEVVECAQHPNADKLRVTKVNVGGDRLLDIVCGAPNCRQGLRVAVATIGAVLPGDFKIKAAKLRGEPSEGMLCSFSELGISDDHSGIIELPADAPIGTDIREYLKLDDNTIEISVTPNRADCLGIIGVARDVAVLNQLPLVEPEIVPVGATIDDTLPITVEAPEACPRYLGRVVKGINVKAPTPLWMKEKLRRCGIRSIDAVVDVTNYVLLELGQPMHAFDKDRIEGGIVVRMAKEGETLVLLDGTEAKLNADTLVIADHNKALAMGGIFGGEHSGVNDETQNVLLECAFFSPLSITGRARRHGLHTDASHRYERGVDPALQHKAMERATRLLIDICGGEAGPVIDITNEATLPKRATITLRRSKLDCLIGHHIADEQVTDILRRLGCEVTEGKDEWQAVAPSWRFDMEIEEDLVEEVARVYGYNNIPDEPVQASLIMGTHREADLSLKRVKTLLNDKGYQEVITYSFVDPKVQQMIHPGVEALLLPSPISVEMSAMRLSLWTGLLATVVYNQNRQQNRVRIFESGLRFVPDTQAPLGIRQDLMLAGVICGNRYEEHWNLAKETVDFYDLKGDLESVLDLTGKLNEVEFRAEANPALHPGQSAAIYLKGERIGFVGVVHPELERKLDLNGRTLVFELEWNKLADRVVPQAREISRFPANRRDIAVVVAENVPAADILSECKKVGVNQVVGVNLFDVYRGKGVAEGYKSLAISLILQDTSRTLEEEEIAATVAKCVEALKERFQASLRD.

The tRNA-binding domain occupies 39–148; it reads AGSFHGVVVG…ADAPIGTDIR (110 aa). Residues 401-476 enclose the B5 domain; sequence PKRATITLRR…RVYGYNNIPD (76 aa). Asp454, Asp460, Glu463, and Glu464 together coordinate Mg(2+). The FDX-ACB domain maps to 701–794; it reads SRFPANRRDI…LKERFQASLR (94 aa).

The protein belongs to the phenylalanyl-tRNA synthetase beta subunit family. Type 1 subfamily. In terms of assembly, tetramer of two alpha and two beta subunits. It depends on Mg(2+) as a cofactor.

The protein localises to the cytoplasm. The enzyme catalyses tRNA(Phe) + L-phenylalanine + ATP = L-phenylalanyl-tRNA(Phe) + AMP + diphosphate + H(+). The sequence is that of Phenylalanine--tRNA ligase beta subunit from Shigella boydii serotype 4 (strain Sb227).